Here is a 198-residue protein sequence, read N- to C-terminus: Endonuclease V (198 aa).

2 residues coordinate Mg(2+): Asp-38 and Asp-101.

Belongs to the endonuclease V family. Requires Mg(2+) as cofactor.

The protein localises to the cytoplasm. The enzyme catalyses Endonucleolytic cleavage at apurinic or apyrimidinic sites to products with a 5'-phosphate.. DNA repair enzyme involved in the repair of deaminated bases. Selectively cleaves double-stranded DNA at the second phosphodiester bond 3' to a deoxyinosine leaving behind the intact lesion on the nicked DNA. The protein is Endonuclease V of Saccharolobus islandicus (strain M.14.25 / Kamchatka #1) (Sulfolobus islandicus).